A 101-amino-acid polypeptide reads, in one-letter code: MEPVDPRLEPWKHPGSQPKTACTTCYCKKCCFHCQVCFTKKALGISYGRKKRRQRRRAPEDSQTHQVSLPKQPAPQFRGDPTGPKESKKKVERETETHPVD.

The span at 1–12 shows a compositional bias: basic and acidic residues; the sequence is MEPVDPRLEPWK. The segment at 1–20 is disordered; that stretch reads MEPVDPRLEPWKHPGSQPKT. The interval 1–24 is interaction with human CREBBP; that stretch reads MEPVDPRLEPWKHPGSQPKTACTT. The tract at residues 1 to 48 is transactivation; that stretch reads MEPVDPRLEPWKHPGSQPKTACTTCYCKKCCFHCQVCFTKKALGISYG. Cys-22, Cys-25, and Cys-27 together coordinate Zn(2+). Positions 22-37 are cysteine-rich; it reads CTTCYCKKCCFHCQVC. Lys-28 carries the post-translational modification N6-acetyllysine; by host PCAF. Zn(2+) contacts are provided by Cys-30, His-33, Cys-34, and Cys-37. Positions 38 to 48 are core; sequence FTKKALGISYG. The interval 47 to 101 is disordered; it reads YGRKKRRQRRRAPEDSQTHQVSLPKQPAPQFRGDPTGPKESKKKVERETETHPVD. The Nuclear localization signal, RNA-binding (TAR), and protein transduction motif lies at 49–57; sequence RKKRRQRRR. Residues 49 to 86 are interaction with the host capping enzyme RNGTT; that stretch reads RKKRRQRRRAPEDSQTHQVSLPKQPAPQFRGDPTGPKE. N6-acetyllysine; by host EP300 and GCN5L2 occurs at positions 50 and 51. Residues Arg-52 and Arg-53 each carry the asymmetric dimethylarginine; by host PRMT6 modification. A Glycyl lysine isopeptide (Lys-Gly) (interchain with G-Cter in ubiquitin) cross-link involves residue Lys-71. The Cell attachment site motif lies at 78 to 80; that stretch reads RGD. Basic and acidic residues predominate over residues 83 to 101; that stretch reads GPKESKKKVERETETHPVD.

Belongs to the lentiviruses Tat family. In terms of assembly, interacts with host CCNT1. Associates with the P-TEFb complex composed at least of Tat, P-TEFb (CDK9 and CCNT1), TAR RNA, RNA Pol II. Recruits the HATs CREBBP, TAF1/TFIID, EP300, PCAF and GCN5L2. Interacts with host KAT5/Tip60; this interaction targets the latter to degradation. Interacts with the host deacetylase SIRT1. Interacts with host capping enzyme RNGTT; this interaction stimulates RNGTT. Binds to host KDR, and to the host integrins ITGAV/ITGB3 and ITGA5/ITGB1. Interacts with host KPNB1/importin beta-1 without previous binding to KPNA1/importin alpha-1. Interacts with EIF2AK2. Interacts with host nucleosome assembly protein NAP1L1; this interaction may be required for the transport of Tat within the nucleus, since the two proteins interact at the nuclear rim. Interacts with host C1QBP/SF2P32; this interaction involves lysine-acetylated Tat. Interacts with the host chemokine receptors CCR2, CCR3 and CXCR4. Interacts with host DPP4/CD26; this interaction may trigger an anti-proliferative effect. Interacts with host LDLR. Interacts with the host extracellular matrix metalloproteinase MMP1. Interacts with host PRMT6; this interaction mediates Tat's methylation. Interacts with, and is ubiquitinated by MDM2/Hdm2. Interacts with host PSMC3 and HTATIP2. Interacts with STAB1; this interaction may overcome SATB1-mediated repression of IL2 and IL2RA (interleukin) in T cells by binding to the same domain than HDAC1. Interacts (when acetylated) with human CDK13, thereby increasing HIV-1 mRNA splicing and promoting the production of the doubly spliced HIV-1 protein Nef. Interacts with host TBP; this interaction modulates the activity of transcriptional pre-initiation complex. Interacts with host RELA. Interacts with host PLSCR1; this interaction negatively regulates Tat transactivation activity by altering its subcellular distribution. Post-translationally, asymmetrical arginine methylation by host PRMT6 seems to diminish the transactivation capacity of Tat and affects the interaction with host CCNT1. Acetylation by EP300, CREBBP, GCN5L2/GCN5 and PCAF regulates the transactivation activity of Tat. EP300-mediated acetylation of Lys-50 promotes dissociation of Tat from the TAR RNA through the competitive binding to PCAF's bromodomain. In addition, the non-acetylated Tat's N-terminus can also interact with PCAF. PCAF-mediated acetylation of Lys-28 enhances Tat's binding to CCNT1. Lys-50 is deacetylated by SIRT1. In terms of processing, polyubiquitination by host MDM2 does not target Tat to degradation, but activates its transactivation function and fosters interaction with CCNT1 and TAR RNA. Post-translationally, phosphorylated by EIF2AK2 on serine and threonine residues adjacent to the basic region important for TAR RNA binding and function. Phosphorylation of Tat by EIF2AK2 is dependent on the prior activation of EIF2AK2 by dsRNA.

The protein localises to the host nucleus. Its subcellular location is the host nucleolus. It is found in the host cytoplasm. The protein resides in the secreted. In terms of biological role, transcriptional activator that increases RNA Pol II processivity, thereby increasing the level of full-length viral transcripts. Recognizes a hairpin structure at the 5'-LTR of the nascent viral mRNAs referred to as the transactivation responsive RNA element (TAR) and recruits the cyclin T1-CDK9 complex (P-TEFb complex) that will in turn hyperphosphorylate the RNA polymerase II to allow efficient elongation. The CDK9 component of P-TEFb and other Tat-activated kinases hyperphosphorylate the C-terminus of RNA Pol II that becomes stabilized and much more processive. Other factors such as HTATSF1/Tat-SF1, SUPT5H/SPT5, and HTATIP2 are also important for Tat's function. Besides its effect on RNA Pol II processivity, Tat induces chromatin remodeling of proviral genes by recruiting the histone acetyltransferases (HATs) CREBBP, EP300 and PCAF to the chromatin. This also contributes to the increase in proviral transcription rate, especially when the provirus integrates in transcriptionally silent region of the host genome. To ensure maximal activation of the LTR, Tat mediates nuclear translocation of NF-kappa-B by interacting with host RELA. Through its interaction with host TBP, Tat may also modulate transcription initiation. Tat can reactivate a latently infected cell by penetrating in it and transactivating its LTR promoter. In the cytoplasm, Tat is thought to act as a translational activator of HIV-1 mRNAs. Functionally, extracellular circulating Tat can be endocytosed by surrounding uninfected cells via the binding to several surface receptors such as CD26, CXCR4, heparan sulfate proteoglycans (HSPG) or LDLR. Neurons are rarely infected, but they internalize Tat via their LDLR. Through its interaction with nuclear HATs, Tat is potentially able to control the acetylation-dependent cellular gene expression. Modulates the expression of many cellular genes involved in cell survival, proliferation or in coding for cytokines or cytokine receptors. Tat plays a role in T-cell and neurons apoptosis. Tat induced neurotoxicity and apoptosis probably contribute to neuroAIDS. Circulating Tat also acts as a chemokine-like and/or growth factor-like molecule that binds to specific receptors on the surface of the cells, affecting many cellular pathways. In the vascular system, Tat binds to ITGAV/ITGB3 and ITGA5/ITGB1 integrins dimers at the surface of endothelial cells and competes with bFGF for heparin-binding sites, leading to an excess of soluble bFGF. This chain is Protein Tat, found in Human immunodeficiency virus type 1 group M subtype B (isolate MN) (HIV-1).